A 349-amino-acid polypeptide reads, in one-letter code: Beta-hexosaminidase (349 aa).

Substrate-binding positions include aspartate 64, arginine 72, arginine 138, and lysine 168–histidine 169. The active-site Proton donor/acceptor is the histidine 181. Aspartate 252 serves as the catalytic Nucleophile.

It belongs to the glycosyl hydrolase 3 family. NagZ subfamily.

It localises to the cytoplasm. The catalysed reaction is Hydrolysis of terminal non-reducing N-acetyl-D-hexosamine residues in N-acetyl-beta-D-hexosaminides.. The protein operates within cell wall biogenesis; peptidoglycan recycling. In terms of biological role, plays a role in peptidoglycan recycling by cleaving the terminal beta-1,4-linked N-acetylglucosamine (GlcNAc) from peptide-linked peptidoglycan fragments, giving rise to free GlcNAc, anhydro-N-acetylmuramic acid and anhydro-N-acetylmuramic acid-linked peptides. This chain is Beta-hexosaminidase, found in Nitrosospira multiformis (strain ATCC 25196 / NCIMB 11849 / C 71).